Here is a 141-residue protein sequence, read N- to C-terminus: Large ribosomal subunit protein uL11 (141 aa).

It belongs to the universal ribosomal protein uL11 family. As to quaternary structure, part of the ribosomal stalk of the 50S ribosomal subunit. Interacts with L10 and the large rRNA to form the base of the stalk. L10 forms an elongated spine to which L12 dimers bind in a sequential fashion forming a multimeric L10(L12)X complex. In terms of processing, one or more lysine residues are methylated.

Its function is as follows. Forms part of the ribosomal stalk which helps the ribosome interact with GTP-bound translation factors. The sequence is that of Large ribosomal subunit protein uL11 from Oceanobacillus iheyensis (strain DSM 14371 / CIP 107618 / JCM 11309 / KCTC 3954 / HTE831).